The primary structure comprises 113 residues: Immunoglobulin lambda variable 2-23 (113 aa).

A signal peptide spans 1 to 19; that stretch reads MAWALLLLTLLTQDTGSWA. Gln20 carries the pyrrolidone carboxylic acid modification. Residues 20 to 44 form a framework-1 region; that stretch reads QSALTQPASVSGSPGQSITISCTGT. One can recognise an Ig-like domain in the interval 20–113; that stretch reads QSALTQPASV…EADYYCCSYA (94 aa). Cys41 and Cys109 are joined by a disulfide. Residues 45 to 53 form a complementarity-determining-1 region; the sequence is SSDVGSYNL. A framework-2 region spans residues 54-70; the sequence is VSWYQQHPGKAPKLMIY. Residues 71 to 73 form a complementarity-determining-2 region; that stretch reads EGS. The tract at residues 73 to 92 is disordered; the sequence is SKRPSGVSNRFSGSKSGNTA. Residues 74–109 are framework-3; it reads KRPSGVSNRFSGSKSGNTASLTISGLQAEDEADYYC. Polar residues predominate over residues 78–92; that stretch reads GVSNRFSGSKSGNTA. Residues 110–113 form a complementarity-determining-3 region; it reads CSYA.

In terms of assembly, immunoglobulins are composed of two identical heavy chains and two identical light chains; disulfide-linked.

The protein localises to the secreted. It localises to the cell membrane. In terms of biological role, v region of the variable domain of immunoglobulin light chains that participates in the antigen recognition. Immunoglobulins, also known as antibodies, are membrane-bound or secreted glycoproteins produced by B lymphocytes. In the recognition phase of humoral immunity, the membrane-bound immunoglobulins serve as receptors which, upon binding of a specific antigen, trigger the clonal expansion and differentiation of B lymphocytes into immunoglobulins-secreting plasma cells. Secreted immunoglobulins mediate the effector phase of humoral immunity, which results in the elimination of bound antigens. The antigen binding site is formed by the variable domain of one heavy chain, together with that of its associated light chain. Thus, each immunoglobulin has two antigen binding sites with remarkable affinity for a particular antigen. The variable domains are assembled by a process called V-(D)-J rearrangement and can then be subjected to somatic hypermutations which, after exposure to antigen and selection, allow affinity maturation for a particular antigen. This chain is Immunoglobulin lambda variable 2-23, found in Homo sapiens (Human).